Here is a 465-residue protein sequence, read N- to C-terminus: MISNGIGTVTAGKRSICLLPLLLIGLWGCVTCHRSPVEDVCTAKPRDIPVNPMCIYRSSEKKATEGQGSEQKIPGATNRRVWELSKANSHFATAFYQHLADSKNNNDNIFLSPLSISTAFAMTKLGACNNTLKQLMEVFKFDTISEKTSDQIHFFFAKLNCRLYRKANKSSELVSANRLFGGKSITFNETYQDISEVVYGAKLQPLDFKGNAEQSRLTINQWISNKTEGRITDVIPPQAINEFTVLVLVNTIYFKGLWKSKFSPENTRKELFYKADGESCSVLMMYQESKFRYRRVAESTQVLELPFKGDDITMVLILPKLEKTLAKVEQELTPDMLQEWLDELTETLLVVHMPRFRIEDSFSVKEQLQDMGLEDLFSPEKSRLPGIVAEGRSDLYVSDAFHKAFLEVNEEGSEAAASTVISIAGRSLNSDRVTFKANRPILVLIREVALNTIIFMGRVANPCVD.

A signal peptide spans 1–32; that stretch reads MISNGIGTVTAGKRSICLLPLLLIGLWGCVTC. 2 cysteine pairs are disulfide-bonded: C41-C161 and C54-C128. T64 carries the phosphothreonine modification. At S69 the chain carries Phosphoserine. W82 contributes to the heparin binding site. The N-linked (GlcNAc...) asparagine glycan is linked to N129. Heparin is bound at residue R162. A glycan (N-linked (GlcNAc...) asparagine) is linked at N168. Heparin is bound at residue R178. 2 N-linked (GlcNAc...) asparagine glycosylation sites follow: N188 and N225. An intrachain disulfide couples C280 to C463.

This sequence belongs to the serpin family. Forms protease inhibiting heterodimer with TMPRSS7. Post-translationally, phosphorylated by FAM20C in the extracellular medium. In terms of tissue distribution, plasma.

The protein resides in the secreted. Its subcellular location is the extracellular space. In terms of biological role, most important serine protease inhibitor in plasma that regulates the blood coagulation cascade. AT-III inhibits thrombin, matriptase-3/TMPRSS7, as well as factors IXa, Xa and XIa. Its inhibitory activity is greatly enhanced in the presence of heparin. The polypeptide is Antithrombin-III (SERPINC1) (Bos taurus (Bovine)).